A 434-amino-acid chain; its full sequence is Putative D-alanyl-D-alanine carboxypeptidase (434 aa).

Residues 7–25 (YLSLLAVSCSVSAAKYPVL) form a helical; Signal-anchor membrane-spanning segment.

It belongs to the peptidase S12 family. YfeW subfamily.

The protein localises to the cell inner membrane. It carries out the reaction Preferential cleavage: (Ac)2-L-Lys-D-Ala-|-D-Ala. Also transpeptidation of peptidyl-alanyl moieties that are N-acyl substituents of D-alanine.. This chain is Putative D-alanyl-D-alanine carboxypeptidase, found in Escherichia coli O157:H7.